The sequence spans 1235 residues: DNA polymerase catalytic subunit (1235 aa).

Disordered regions lie at residues glutamine 640 to glycine 691 and alanine 1098 to proline 1134. Over residues alanine 650–glutamate 661 the composition is skewed to basic and acidic residues. Acidic residues predominate over residues glutamate 662 to glutamate 675. Basic and acidic residues predominate over residues glutamate 676–glycine 691.

The protein belongs to the DNA polymerase type-B family. In terms of assembly, forms a complex with the ssDNA-binding protein UL29, the DNA polymerase processivity factor, and the alkaline exonuclease. Interacts with the putative helicase-primase complex subunit UL8; this interaction may coordinate leading and lagging strand DNA synthesis at the replication fork.

The protein localises to the host nucleus. It catalyses the reaction DNA(n) + a 2'-deoxyribonucleoside 5'-triphosphate = DNA(n+1) + diphosphate. It carries out the reaction Endonucleolytic cleavage to 5'-phosphomonoester.. Functionally, replicates viral genomic DNA. The replication complex is composed of six viral proteins: the DNA polymerase, processivity factor, primase, primase-associated factor, helicase, and ssDNA-binding protein. Additionally, the polymerase contains an intrinsic ribonuclease H (RNase H) activity that specifically degrades RNA/DNA heteroduplexes or duplex DNA substrates in the 5' to 3' direction. Therefore, it can catalyze the excision of the RNA primers that initiate the synthesis of Okazaki fragments at a replication fork during viral DNA replication. In Homo sapiens (Human), this protein is DNA polymerase catalytic subunit.